A 488-amino-acid chain; its full sequence is Rhamnulokinase (488 aa).

13 to 17 provides a ligand contact to ATP; the sequence is ASSGR. Cys68 and Cys222 are disulfide-bonded. Residues Gly83 and 236–238 each bind substrate; that span reads HDT. The Proton acceptor role is filled by Asp237. Thr259 lines the ATP pocket. Asn296 lines the substrate pocket. Residue Gln304 coordinates ATP. Cys353 and Cys370 are joined by a disulfide. Gly402 provides a ligand contact to ATP. An intrachain disulfide couples Cys413 to Cys417.

This sequence belongs to the rhamnulokinase family. Requires Mg(2+) as cofactor.

The enzyme catalyses L-rhamnulose + ATP = L-rhamnulose 1-phosphate + ADP + H(+). It functions in the pathway carbohydrate degradation; L-rhamnose degradation; glycerone phosphate from L-rhamnose: step 2/3. Involved in the catabolism of L-rhamnose (6-deoxy-L-mannose). Catalyzes the transfer of the gamma-phosphate group from ATP to the 1-hydroxyl group of L-rhamnulose to yield L-rhamnulose 1-phosphate. The polypeptide is Rhamnulokinase (Klebsiella pneumoniae subsp. pneumoniae (strain ATCC 700721 / MGH 78578)).